Reading from the N-terminus, the 109-residue chain is Aquaporin-2 (109 aa).

Topologically, residues 1-6 (SIAFSR) are cytoplasmic. A helical membrane pass occupies residues 7-27 (AVFTEFLATLLFVFFGLGSAL). At 28 to 35 (NWPQALPS) the chain is on the extracellular side. A helical membrane pass occupies residues 36–54 (VLQIAMAFGLAIGTLVQML). The Cytoplasmic portion of the chain corresponds to 55–59 (GHISG). Positions 60–69 (AHINPAVTVA) form an intramembrane region, discontinuously helical. The short motif at 63–65 (NPA) is the NPA 1 element. Residues 70–80 (CLVGCHISFLR) lie on the Cytoplasmic side of the membrane. The helical transmembrane segment at 81–102 (AAFYVAAQLLGAVAGAALLHEV) threads the bilayer. The Extracellular portion of the chain corresponds to 103–109 (TPPSIRG).

Belongs to the MIP/aquaporin (TC 1.A.8) family. Homotetramer. Post-translationally, serine phosphorylation is necessary and sufficient for expression at the apical membrane. Endocytosis is not phosphorylation-dependent. In terms of processing, N-glycosylated.

It localises to the apical cell membrane. The protein resides in the basolateral cell membrane. Its subcellular location is the cell membrane. The protein localises to the cytoplasmic vesicle membrane. It is found in the golgi apparatus. It localises to the trans-Golgi network membrane. It catalyses the reaction H2O(in) = H2O(out). The enzyme catalyses glycerol(in) = glycerol(out). In terms of biological role, forms a water-specific channel that provides the plasma membranes of renal collecting duct with high permeability to water, thereby permitting water to move in the direction of an osmotic gradient. Plays an essential role in renal water homeostasis. Could also be permeable to glycerol. The chain is Aquaporin-2 from Erinaceus europaeus (Western European hedgehog).